Reading from the N-terminus, the 215-residue chain is Cytochrome b6 (215 aa).

The helical transmembrane segment at 32 to 52 (IFHCLGGITLTCFLVQVATGF) threads the bilayer. Cys35 provides a ligand contact to heme c. The heme b site is built by His86 and His100. The next 3 helical transmembrane spans lie at 90–110 (ASMM…TGGF), 116–136 (LTWV…VTGY), and 186–206 (LHTF…FPMI). The heme b site is built by His187 and His202.

It belongs to the cytochrome b family. PetB subfamily. In terms of assembly, the 4 large subunits of the cytochrome b6-f complex are cytochrome b6, subunit IV (17 kDa polypeptide, PetD), cytochrome f and the Rieske protein, while the 4 small subunits are PetG, PetL, PetM and PetN. The complex functions as a dimer. Heme b serves as cofactor. Heme c is required as a cofactor.

The protein localises to the plastid. The protein resides in the chloroplast thylakoid membrane. Functionally, component of the cytochrome b6-f complex, which mediates electron transfer between photosystem II (PSII) and photosystem I (PSI), cyclic electron flow around PSI, and state transitions. This chain is Cytochrome b6, found in Amborella trichopoda.